Consider the following 211-residue polypeptide: Inactive ribonuclease-like protein 10 (211 aa).

The first 24 residues, M1–G24, serve as a signal peptide directing secretion.

The protein belongs to the pancreatic ribonuclease family. The N-terminus is blocked. Glycosylated.

The protein resides in the secreted. In terms of biological role, secreted proximal epididymal protein required for post-testicular sperm maturation and male fertility. May be involved in sperm adhesion to the egg zona pellucida. Does not have ribonuclease activity. This Bos taurus (Bovine) protein is Inactive ribonuclease-like protein 10 (RNASE10).